The primary structure comprises 962 residues: Vacuolar membrane protease (962 aa).

Over 1 to 14 (MLAQFLRSLFRFRK) the chain is Cytoplasmic. The helical transmembrane segment at 15-35 (TTVSVLLVATYVVVFLLNVWD) threads the bilayer. Over 36 to 359 (RIRYQYSLPE…FVTASTKDLF (324 aa)) the chain is Vacuolar. N-linked (GlcNAc...) asparagine glycosylation is present at Asn118. His153 and Asp165 together coordinate Zn(2+). Glu197 (proton acceptor) is an active-site residue. Positions 198, 223, and 297 each coordinate Zn(2+). Residues 360-380 (TLNCVVLSVIPVIILVLEFVI) traverse the membrane as a helical segment. At 381–390 (QRRKTRERNP) the chain is on the cytoplasmic side. The helical transmembrane segment at 391–411 (LLVWLRLPFSMFISYLVTATF) threads the bilayer. The Vacuolar portion of the chain corresponds to 412–431 (RSSLFRVNPLIFSRDYVSPT). The chain crosses the membrane as a helical span at residues 432–452 (IGFSFTFLILNYLVLSLLEYL). At 453 to 460 (APSRDLKT) the chain is on the cytoplasmic side. Residues 461-481 (VSFVELFFGMWIALLWATIRL) traverse the membrane as a helical segment. Residues 482-489 (CTSKYTAT) lie on the Vacuolar side of the membrane. The helical transmembrane segment at 490–510 (GVYPITVLYLLMSFGAIVGLV) threads the bilayer. Over 511-601 (CSAFKRKHSV…VVSALNYDWS (91 aa)) the chain is Cytoplasmic. Polar residues predominate over residues 531-554 (APNTYSSIEESPQQATNTEAPNEN). The segment at 531–563 (APNTYSSIEESPQQATNTEAPNENSPEEHDERA) is disordered. The chain crosses the membrane as a helical span at residues 602 to 622 (VQFLAVVPLASFFVIMCLSLI). Over 623 to 639 (LDGIYQTCQEGFQATWN) the chain is Vacuolar. Asn639 is a glycosylation site (N-linked (GlcNAc...) asparagine). Residues 640–660 (VSKISMLGGMLLAIPVLPFCY) traverse the membrane as a helical segment. Position 661 (Lys661) is a topological domain, cytoplasmic. Residues 662 to 682 (LNYFVSMVLLFAAASAGIFSF) form a helical membrane-spanning segment. Residues 683–962 (ERAPFTESSP…LVIVNDYIEL (280 aa)) lie on the Vacuolar side of the membrane. N-linked (GlcNAc...) asparagine glycans are attached at residues Asn812 and Asn839.

This sequence belongs to the peptidase M28 family. Zn(2+) serves as cofactor.

The protein resides in the vacuole membrane. May be involved in vacuolar sorting and osmoregulation. The chain is Vacuolar membrane protease from Lachancea thermotolerans (strain ATCC 56472 / CBS 6340 / NRRL Y-8284) (Yeast).